The primary structure comprises 103 residues: Large ribosomal subunit protein uL24 (103 aa).

This sequence belongs to the universal ribosomal protein uL24 family. Part of the 50S ribosomal subunit.

In terms of biological role, one of two assembly initiator proteins, it binds directly to the 5'-end of the 23S rRNA, where it nucleates assembly of the 50S subunit. Functionally, one of the proteins that surrounds the polypeptide exit tunnel on the outside of the subunit. The protein is Large ribosomal subunit protein uL24 of Actinobacillus succinogenes (strain ATCC 55618 / DSM 22257 / CCUG 43843 / 130Z).